A 324-amino-acid chain; its full sequence is Aldo-keto reductase family 1 member A1-A (324 aa).

NADP(+) is bound by residues 10–19 (GQRMPTVGLG), T20, W21, and D44. The active-site Proton donor is Y49. Positions 161, 162, 210, 212, 214, 262, 263, 264, 265, 268, 271, and 272 each coordinate NADP(+).

Belongs to the aldo/keto reductase family.

It localises to the cytoplasm. It is found in the cytosol. Its subcellular location is the apical cell membrane. The catalysed reaction is a primary alcohol + NADP(+) = an aldehyde + NADPH + H(+). The enzyme catalyses S-nitroso-CoA + NADPH + H(+) = sulfinamide-CoA + NADP(+). It catalyses the reaction S-nitrosoglutathione + NADPH + H(+) = S-(hydroxysulfenamide)glutathione + NADP(+). Catalyzes the NADPH-dependent reduction of a wide variety of carbonyl-containing compounds to their corresponding alcohols. Displays enzymatic activity towards endogenous metabolites such as aromatic and aliphatic aldehydes, ketones, monosaccharides and bile acids. Acts as an aldehyde-detoxification enzyme. Also acts as an inhibitor of protein S-nitrosylation by mediating degradation of S-nitroso-coenzyme A (S-nitroso-CoA), a cofactor required to S-nitrosylate proteins. Also acts as a S-nitroso-glutathione reductase by catalyzing the NADPH-dependent reduction of S-nitrosoglutathione. Displays no reductase activity towards retinoids. The polypeptide is Aldo-keto reductase family 1 member A1-A (akr1a1a) (Danio rerio (Zebrafish)).